The sequence spans 60 residues: Large ribosomal subunit protein bL32 (60 aa).

Belongs to the bacterial ribosomal protein bL32 family.

This chain is Large ribosomal subunit protein bL32, found in Pediococcus pentosaceus (strain ATCC 25745 / CCUG 21536 / LMG 10740 / 183-1w).